The sequence spans 537 residues: Probable alpha-galactosidase A (537 aa).

Positions Met-1–Gly-23 are cleaved as a signal peptide. Residues Cys-46 and Cys-78 are joined by a disulfide bond. 4 N-linked (GlcNAc...) asparagine glycosylation sites follow: Asn-49, Asn-87, Asn-93, and Asn-123. Residues Cys-126 and Cys-156 are joined by a disulfide bond. The active-site Nucleophile is Asp-154. Asn-203 is a glycosylation site (N-linked (GlcNAc...) asparagine). Residue Asp-212 is the Proton donor of the active site. N-linked (GlcNAc...) asparagine glycans are attached at residues Asn-355 and Asn-436. Residues Cys-413–Ser-537 enclose the Ricin B-type lectin domain. Intrachain disulfides connect Cys-430–Cys-444 and Cys-469–Cys-482. N-linked (GlcNAc...) asparagine glycosylation occurs at Asn-491.

The protein belongs to the glycosyl hydrolase 27 family.

The protein localises to the secreted. The catalysed reaction is Hydrolysis of terminal, non-reducing alpha-D-galactose residues in alpha-D-galactosides, including galactose oligosaccharides, galactomannans and galactolipids.. Functionally, hydrolyzes a variety of simple alpha-D-galactoside as well as more complex molecules such as oligosaccharides and polysaccharides. This chain is Probable alpha-galactosidase A (aglA), found in Aspergillus niger (strain ATCC MYA-4892 / CBS 513.88 / FGSC A1513).